Consider the following 75-residue polypeptide: MSRFFRRRKFCRFTAEGATSIDYKDIATLKNYITESGKIVPSRITGTAAKYQRQLTRAIKRARYLSLLPYTDLHK.

It belongs to the bacterial ribosomal protein bS18 family. Part of the 30S ribosomal subunit. Forms a tight heterodimer with protein bS6.

Functionally, binds as a heterodimer with protein bS6 to the central domain of the 16S rRNA, where it helps stabilize the platform of the 30S subunit. The sequence is that of Small ribosomal subunit protein bS18 from Colwellia psychrerythraea (strain 34H / ATCC BAA-681) (Vibrio psychroerythus).